A 284-amino-acid chain; its full sequence is L-ribulose-5-phosphate 3-epimerase UlaE (284 aa).

This sequence belongs to the L-ribulose-5-phosphate 3-epimerase family.

The catalysed reaction is L-ribulose 5-phosphate = L-xylulose 5-phosphate. It functions in the pathway cofactor degradation; L-ascorbate degradation; D-xylulose 5-phosphate from L-ascorbate: step 3/4. Functionally, catalyzes the isomerization of L-xylulose-5-phosphate to L-ribulose-5-phosphate. Is involved in the anaerobic L-ascorbate utilization. This is L-ribulose-5-phosphate 3-epimerase UlaE from Escherichia coli O8 (strain IAI1).